A 282-amino-acid chain; its full sequence is Putative 4-diphosphocytidyl-2-C-methyl-D-erythritol kinase (282 aa).

Lysine 9 is an active-site residue. 93-103 (PVSAGLAGGSA) is a binding site for ATP. Aspartate 135 is a catalytic residue.

It belongs to the GHMP kinase family. IspE subfamily.

The enzyme catalyses 4-CDP-2-C-methyl-D-erythritol + ATP = 4-CDP-2-C-methyl-D-erythritol 2-phosphate + ADP + H(+). In terms of biological role, catalyzes the phosphorylation of the position 2 hydroxy group of 4-diphosphocytidyl-2C-methyl-D-erythritol. This is Putative 4-diphosphocytidyl-2-C-methyl-D-erythritol kinase from Staphylococcus aureus (strain MRSA252).